Here is a 590-residue protein sequence, read N- to C-terminus: Auxin response factor 20 (590 aa).

The segment at residues 126 to 224 (FTKVLTASDT…ELRVGIRRAR (99 aa)) is a DNA-binding region (TF-B3). The region spanning 495 to 576 (RTCTKVQMQG…MVKKILIYSK (82 aa)) is the PB1 domain.

Belongs to the ARF family. In terms of assembly, homodimers and heterodimers.

Its subcellular location is the nucleus. Its function is as follows. Auxin response factors (ARFs) are transcriptional factors that bind specifically to the DNA sequence 5'-TGTCTC-3' found in the auxin-responsive promoter elements (AuxREs). Could act as transcriptional activator or repressor. Formation of heterodimers with Aux/IAA proteins may alter their ability to modulate early auxin response genes expression. The polypeptide is Auxin response factor 20 (ARF20) (Arabidopsis thaliana (Mouse-ear cress)).